The primary structure comprises 788 residues: Ribonucleoside-diphosphate reductase subunit alpha (788 aa).

Residues 2 to 92 form the ATP-cone domain; the sequence is ITVVKRNGRI…LYDLYHKVSG (91 aa). Residues Lys-6, 12-18, and Thr-52 contribute to the ATP site; that span reads EPLDITK. Position 200 (Thr-200) interacts with GDP. Cys-216 and Cys-497 are joined by a disulfide. DTTP-binding positions include 223–225 and Arg-253; that span reads DNI. Asn-424 contributes to the GDP binding site. Catalysis depends on Asn-424, which acts as the Proton acceptor. Cys-426 functions as the Cysteine radical intermediate in the catalytic mechanism. Residues Glu-428 and 661–663 each bind GDP; that span reads SSI. Glu-428 serves as the catalytic Proton acceptor.

This sequence belongs to the ribonucleoside diphosphate reductase large chain family. Tetramer of two alpha and two beta subunits.

The enzyme catalyses a 2'-deoxyribonucleoside 5'-diphosphate + [thioredoxin]-disulfide + H2O = a ribonucleoside 5'-diphosphate + [thioredoxin]-dithiol. With respect to regulation, under complex allosteric control mediated by deoxynucleoside triphosphates and ATP binding to separate specificity and activation sites on the alpha subunit. The type of nucleotide bound at the specificity site determines substrate preference. It seems probable that ATP makes the enzyme reduce CDP and UDP, dGTP favors ADP reduction and dTTP favors GDP reduction. Stimulated by ATP and inhibited by dATP binding to the activity site. Functionally, provides the precursors necessary for DNA synthesis. Catalyzes the biosynthesis of deoxyribonucleotides from the corresponding ribonucleotides. This chain is Ribonucleoside-diphosphate reductase subunit alpha (nrdA), found in Helicobacter pylori (strain J99 / ATCC 700824) (Campylobacter pylori J99).